The sequence spans 44 residues: Large ribosomal subunit protein bL34 (44 aa).

Belongs to the bacterial ribosomal protein bL34 family.

In Wolbachia pipientis wMel, this protein is Large ribosomal subunit protein bL34.